Here is a 628-residue protein sequence, read N- to C-terminus: Biosynthetic arginine decarboxylase (628 aa).

The residue at position 101 (lysine 101) is an N6-(pyridoxal phosphate)lysine. Substrate is bound at residue 281–291 (VDVGGGLGVDY).

The protein belongs to the Orn/Lys/Arg decarboxylase class-II family. SpeA subfamily. Requires Mg(2+) as cofactor. It depends on pyridoxal 5'-phosphate as a cofactor.

It catalyses the reaction L-arginine + H(+) = agmatine + CO2. It participates in amine and polyamine biosynthesis; agmatine biosynthesis; agmatine from L-arginine: step 1/1. Catalyzes the biosynthesis of agmatine from arginine. The sequence is that of Biosynthetic arginine decarboxylase from Alkalilimnicola ehrlichii (strain ATCC BAA-1101 / DSM 17681 / MLHE-1).